Reading from the N-terminus, the 360-residue chain is DNA replication and repair protein RecF (360 aa).

30–37 (GQNGSGKT) contributes to the ATP binding site.

The protein belongs to the RecF family.

It is found in the cytoplasm. The RecF protein is involved in DNA metabolism; it is required for DNA replication and normal SOS inducibility. RecF binds preferentially to single-stranded, linear DNA. It also seems to bind ATP. The protein is DNA replication and repair protein RecF of Shewanella baltica (strain OS223).